The primary structure comprises 104 residues: Protein EPIDERMAL PATTERNING FACTOR 1 (104 aa).

The N-terminal stretch at 1 to 20 (MKSLLLLAFFLSFFFGSLLA) is a signal peptide. 4 disulfide bridges follow: cysteine 60–cysteine 94, cysteine 64–cysteine 70, cysteine 67–cysteine 96, and cysteine 79–cysteine 88. Residue asparagine 98 is glycosylated (N-linked (GlcNAc...) asparagine).

The protein belongs to the plant cysteine rich small secretory peptide family. Epidermal patterning factor subfamily. Interacts with ERECTA and ERL1, but not with TMM. As to expression, expressed in shoots, but not in roots. Mostly localized in developing leaves, specifically in meristemoids, guard mother cells (GMCs), and young guard cells.

The protein resides in the secreted. Functionally, controls stomatal patterning. Regulates asymmetric cell division during guard cell differentiation. Mediates stomatal development inhibition. Not cleaved by the protease CRSP (AC Q9LNU1). MEPF1: mobile signal controlling stomatal development in a non-cell-autonomous manner. Uses ERL1 as major receptor. May act by competing with somatogen (AC Q9SV72) for the same receptor, TMM (AC Q9SSD1). The chain is Protein EPIDERMAL PATTERNING FACTOR 1 from Arabidopsis thaliana (Mouse-ear cress).